The primary structure comprises 364 residues: Biotin synthase (364 aa).

The disordered stretch occupies residues 14–36 (DTIPPGTETPYASPSHARTEEAP). One can recognise a Radical SAM core domain in the interval 70–308 (RKGPLATTCG…QRDILVCGGR (239 aa)). Residues cysteine 88, cysteine 92, and cysteine 95 each coordinate [4Fe-4S] cluster. Positions 164 and 233 each coordinate [2Fe-2S] cluster.

It belongs to the radical SAM superfamily. Biotin synthase family. In terms of assembly, homodimer. [4Fe-4S] cluster is required as a cofactor. It depends on [2Fe-2S] cluster as a cofactor.

The catalysed reaction is (4R,5S)-dethiobiotin + (sulfur carrier)-SH + 2 reduced [2Fe-2S]-[ferredoxin] + 2 S-adenosyl-L-methionine = (sulfur carrier)-H + biotin + 2 5'-deoxyadenosine + 2 L-methionine + 2 oxidized [2Fe-2S]-[ferredoxin]. It functions in the pathway cofactor biosynthesis; biotin biosynthesis; biotin from 7,8-diaminononanoate: step 2/2. Functionally, catalyzes the conversion of dethiobiotin (DTB) to biotin by the insertion of a sulfur atom into dethiobiotin via a radical-based mechanism. This Nitratidesulfovibrio vulgaris (strain DSM 19637 / Miyazaki F) (Desulfovibrio vulgaris) protein is Biotin synthase.